A 1026-amino-acid polypeptide reads, in one-letter code: Multidrug resistance protein MdtC (1026 aa).

11 helical membrane passes run 15-35 (ILIA…LPVA), 333-353 (EVEE…FLFL), 360-380 (LIPA…MYLC), 387-407 (LSLM…IVVL), 431-451 (VGFT…PLLL), 463-483 (FAVT…TLTP), 528-548 (LVGV…IAIP), 853-873 (LILI…LYES), 897-917 (LFNA…IGIV), 953-973 (PIMM…LSGG), and 984-1004 (ITIV…TPVV).

The protein belongs to the resistance-nodulation-cell division (RND) (TC 2.A.6) family. MdtC subfamily. In terms of assembly, part of a tripartite efflux system composed of MdtA, MdtB and MdtC. MdtC forms a heteromultimer with MdtB.

It localises to the cell inner membrane. The sequence is that of Multidrug resistance protein MdtC from Salmonella paratyphi C (strain RKS4594).